A 377-amino-acid polypeptide reads, in one-letter code: Methionine import ATP-binding protein MetN 2 (377 aa).

In terms of domain architecture, ABC transporter spans 25-262 (IRIEHLSKTF…PKSAVARSFL (238 aa)). 59–66 (GRSGAGKS) provides a ligand contact to ATP.

It belongs to the ABC transporter superfamily. Methionine importer (TC 3.A.1.24) family. As to quaternary structure, the complex is composed of two ATP-binding proteins (MetN), two transmembrane proteins (MetI) and a solute-binding protein (MetQ).

It localises to the cell inner membrane. The catalysed reaction is L-methionine(out) + ATP + H2O = L-methionine(in) + ADP + phosphate + H(+). The enzyme catalyses D-methionine(out) + ATP + H2O = D-methionine(in) + ADP + phosphate + H(+). Its function is as follows. Part of the ABC transporter complex MetNIQ involved in methionine import. Responsible for energy coupling to the transport system. The polypeptide is Methionine import ATP-binding protein MetN 2 (Rhodopseudomonas palustris (strain ATCC BAA-98 / CGA009)).